A 356-amino-acid chain; its full sequence is NADH-quinone oxidoreductase subunit H (356 aa).

8 consecutive transmembrane segments (helical) span residues 4-24 (ALIL…LTGV), 79-99 (LLAP…IPFG), 127-147 (GVLY…IAGW), 166-186 (ISYE…TGSL), 198-218 (MWNI…TAMF), 251-271 (FFLA…LLFF), 289-309 (FIGL…FIWV), and 329-349 (MIPW…YWKE).

Belongs to the complex I subunit 1 family. As to quaternary structure, NDH-1 is composed of 14 different subunits. Subunits NuoA, H, J, K, L, M, N constitute the membrane sector of the complex.

The protein localises to the cell inner membrane. The catalysed reaction is a quinone + NADH + 5 H(+)(in) = a quinol + NAD(+) + 4 H(+)(out). Functionally, NDH-1 shuttles electrons from NADH, via FMN and iron-sulfur (Fe-S) centers, to quinones in the respiratory chain. The immediate electron acceptor for the enzyme in this species is believed to be ubiquinone. Couples the redox reaction to proton translocation (for every two electrons transferred, four hydrogen ions are translocated across the cytoplasmic membrane), and thus conserves the redox energy in a proton gradient. This subunit may bind ubiquinone. The chain is NADH-quinone oxidoreductase subunit H from Leptospira biflexa serovar Patoc (strain Patoc 1 / ATCC 23582 / Paris).